A 387-amino-acid chain; its full sequence is Patatin-02 (387 aa).

Residues 1–23 (MATTKSFLILIVMILATTSSTFA) form the signal peptide. Positions 32–230 (LSIDGGGIKG…TVADPALLSV (199 aa)) constitute a PNPLA domain. The GXGXXG signature appears at 36–41 (GGGIKG). The GXSXG signature appears at 75-79 (GTSTG). Catalysis depends on Ser77, which acts as the Nucleophile. An N-linked (GlcNAc...) asparagine glycan is attached at Asn115. Asp216 acts as the Proton acceptor in catalysis. Positions 216–218 (DGA) match the DGA/G motif. Positions 361 to 385 (ETYEEALKRFAKLLSDRKKLRANKA) form a coiled coil.

It belongs to the patatin family. As to expression, tuber and stolon.

It localises to the vacuole. Probable lipolytic acyl hydrolase (LAH), an activity which is thought to be involved in the response of tubers to pathogens. This Solanum tuberosum (Potato) protein is Patatin-02.